A 296-amino-acid polypeptide reads, in one-letter code: Prostate androgen-regulated mucin-like protein 1 homolog (296 aa).

An N-terminal signal peptide occupies residues Met1–Gly20. The Extracellular segment spans residues Ser21–Ser244. N-linked (GlcNAc...) asparagine glycosylation is found at Asn61 and Asn95. Residues Leu72 to Val220 form a disordered region. A compositionally biased stretch (basic and acidic residues) spans Thr78 to Asn95. Residues Ser96–Asp110 show a composition bias toward polar residues. Over residues Leu139–Ser167 the composition is skewed to low complexity. Polar residues predominate over residues His168–Pro177. Asn169 carries an N-linked (GlcNAc...) asparagine glycan. Basic and acidic residues predominate over residues Val206 to Pro217. A helical transmembrane segment spans residues Ile245 to Tyr265. The Cytoplasmic portion of the chain corresponds to Leu266–Ser296. Position 284 is a phosphoserine (Ser284).

It belongs to the PARM family. Post-translationally, highly N-glycosylated and O-glycosylated.

It localises to the cell membrane. Its subcellular location is the golgi apparatus membrane. The protein localises to the endosome membrane. Its function is as follows. May regulate TLP1 expression and telomerase activity, thus enabling certain prostatic cells to resist apoptosis. The polypeptide is Prostate androgen-regulated mucin-like protein 1 homolog (Parm1) (Mus musculus (Mouse)).